The primary structure comprises 748 residues: ATP-dependent RNA helicase DRS1 (748 aa).

2 disordered regions span residues 1-72 and 111-211; these read MAVK…PEFQ and RKGG…EDTK. Residues 18 to 32 are compositionally biased toward acidic residues; the sequence is DSEEDVPDLDASDDE. Residues 38–52 are compositionally biased toward basic residues; it reads VKSSKTKNKSKKKAK. A compositionally biased stretch (basic and acidic residues) spans 58 to 67; it reads HLDEDVHEDL. 3 stretches are compositionally biased toward acidic residues: residues 124 to 153, 168 to 185, and 202 to 211; these read DAEE…DELA, ENEE…DEDD, and EDEDIEEDTK. Residues 233 to 261 carry the Q motif motif; it reads KTFNSLSLSRPVLKGLGSLGYTSPSPIQS. The 176-residue stretch at 264 to 439 folds into the Helicase ATP-binding domain; it reads IPIALLGKDI…SLSLKKPVRI (176 aa). 277–284 contributes to the ATP binding site; that stretch reads AVTGSGKT. The DEAD box signature appears at 387–390; it reads DEAD. A Helicase C-terminal domain is found at 468-628; sequence LLYQLIRKLD…TQVEQVNSLI (161 aa). Residues 632–667 are a coiled coil; it reads GDVVEEIIEEEKQEKEILRAEMELRKGENMLKHKEE. The segment at 687-748 is disordered; it reads KMLQVLAKNK…YGKKGKKGKK (62 aa). The segment covering 694 to 705 has biased composition (basic residues); it reads KNKKPINSKKRK. A compositionally biased stretch (basic and acidic residues) spans 720 to 732; the sequence is TQKDRVEYQERQY.

It belongs to the DEAD box helicase family. DDX27/DRS1 subfamily. Associates with pre-ribosomal particles.

The protein resides in the nucleus. It localises to the nucleolus. It catalyses the reaction ATP + H2O = ADP + phosphate + H(+). In terms of biological role, ATP-binding RNA helicase involved in ribosome assembly. The chain is ATP-dependent RNA helicase DRS1 (DRS1) from Kluyveromyces lactis (strain ATCC 8585 / CBS 2359 / DSM 70799 / NBRC 1267 / NRRL Y-1140 / WM37) (Yeast).